Reading from the N-terminus, the 785-residue chain is Ribosome biogenesis protein BOP1 homolog (785 aa).

The span at 1-11 shows a compositional bias: basic residues; it reads MTKKLTIKRKV. The disordered stretch occupies residues 1-160; the sequence is MTKKLTIKRK…DSDTSDEEDI (160 aa). Acidic residues-rich tracts occupy residues 45–54, 61–73, and 85–102; these read EDSTDDEGID, SSEDLEFESDEEG, and SGDDDEESAEDEEEEDDA. Residues 103-112 are compositionally biased toward basic and acidic residues; it reads DAKKSSKNND. The span at 150-159 shows a compositional bias: acidic residues; that stretch reads ADSDTSDEED. WD repeat units lie at residues 446–487, 489–527, 571–613, 616–654, 657–696, 700–739, and 755–785; these read GHTD…RTIE, EDVVRCVAWCPNAKLSIIAVATGSRLLLVNPKVGDKLLV, THFK…SQIP, KSKGLIQCVLFHPVKPCFFVATQHNIRIYDLVKQELIKK, TNSKWISGMSIHPKGDNLLVSTYDKKMLWFDLDLSTKPYQ, LHRNAVRSVAFHLRYPLFASGSDDQAVIVSHGMVYNDLLQ, and REEFGVLDVNWHPVQPWVFSTGADCTIRLFT.

Belongs to the WD repeat BOP1/ERB1 family.

The protein localises to the nucleus. The protein resides in the nucleolus. It is found in the nucleoplasm. In terms of biological role, required for maturation of ribosomal RNAs and formation of the large ribosomal subunit. This chain is Ribosome biogenesis protein BOP1 homolog, found in Drosophila persimilis (Fruit fly).